Here is a 49-residue protein sequence, read N- to C-terminus: Large ribosomal subunit protein bL33 (49 aa).

This sequence belongs to the bacterial ribosomal protein bL33 family.

In Carboxydothermus hydrogenoformans (strain ATCC BAA-161 / DSM 6008 / Z-2901), this protein is Large ribosomal subunit protein bL33.